Consider the following 576-residue polypeptide: Peroxisomal targeting signal receptor (576 aa).

Cysteine 10 participates in a covalent cross-link: Glycyl cysteine thioester (Cys-Gly) (interchain with G-Cter in ubiquitin). The amphipathic helix 1 (AH1) stretch occupies residues 11–33 (AAGSNPLAQFTKHTQHDTSLQQS). Lysine 22 is covalently cross-linked (Glycyl lysine isopeptide (Lys-Gly) (interchain with G-Cter in ubiquitin)). Residues 58 to 75 (RQQMDQFMQQQNNPAFNF) form an amphipathic helix 2 (AH2) region. 2 consecutive short sequence motifs (wxxxF/Y motif) follow at residues 100–104 (WNQEF) and 128–132 (WAQDF). The disordered stretch occupies residues 176–195 (AQMQQQNPAQAQTSEQSQTQ). A WxxxF/Y motif 3 motif is present at residues 196–200 (WEDQF). Positions 224-240 (FEQVWDDIQVSYADVEL) are amphipathic helix 4 (AH4). A WxxxF/Y motif 4 motif is present at residues 249–253 (WEKDF). TPR repeat units follow at residues 278-311 (PDAY…DPKH), 312-345 (VDAW…DPTN), 346-383 (LAAL…IASR), 384-421 (ARSS…ASMD), 422-455 (ADVQ…EPDK), 456-489 (ALNW…NPNF), and 490-523 (VRAR…HEVE).

The protein belongs to the peroxisomal targeting signal receptor family. As to quaternary structure, interacts (via WxxxF/Y and LVxEF motifs) with PEX14; promoting translocation through the PEX13-PEX14 docking complex. Interacts with PEX8. In terms of processing, a disulfide bond is created between Cys-10 and Cys-338 or Cys-444. Monoubiquitinated at Cys-10 by PEX2 during PEX5 passage through the retrotranslocation channel: monoubiquitination acts as a signal for PEX5 extraction and is required for proper export from peroxisomes and recycling. When PEX5 recycling is compromised, polyubiquitinated at Lys-22 by PEX10 during its passage through the retrotranslocation channel, leading to its degradation.

The protein localises to the peroxisome membrane. It is found in the cytoplasm. Its subcellular location is the cytosol. It localises to the peroxisome matrix. In terms of biological role, receptor that mediates peroxisomal import of proteins containing a C-terminal PTS1-type tripeptide peroxisomal targeting signal (SKL-type). Binds to cargo proteins containing a PTS1 peroxisomal targeting signal in the cytosol, and translocates them into the peroxisome matrix by passing through the peroxisomal docking complex along with cargo proteins. PEX5 receptor is then retrotranslocated into the cytosol, leading to release of bound cargo in the peroxisome matrix, and reset for a subsequent peroxisome import cycle. Required for PEX7 ubiquitination. In Komagataella phaffii (strain GS115 / ATCC 20864) (Yeast), this protein is Peroxisomal targeting signal receptor.